The chain runs to 474 residues: Pyruvate kinase (474 aa).

Arg-37 contacts substrate. Residues Asn-39, Ser-41, and Asp-71 each contribute to the K(+) site. ATP is bound at residue 39–42 (NFSH). The ATP site is built by Arg-78 and Lys-160. Glu-222 serves as a coordination point for Mg(2+). The substrate site is built by Gly-245, Asp-246, and Thr-278. A Mg(2+)-binding site is contributed by Asp-246.

It belongs to the pyruvate kinase family. Homotetramer. The cofactor is Mg(2+). K(+) is required as a cofactor.

The catalysed reaction is pyruvate + ATP = phosphoenolpyruvate + ADP + H(+). It participates in carbohydrate degradation; glycolysis; pyruvate from D-glyceraldehyde 3-phosphate: step 5/5. The protein is Pyruvate kinase (ttuE) of Agrobacterium vitis (Rhizobium vitis).